Here is a 65-residue protein sequence, read N- to C-terminus: Probable tautomerase RSp1151 (65 aa).

Pro2 serves as the catalytic Proton acceptor; via imino nitrogen.

It belongs to the 4-oxalocrotonate tautomerase family.

This chain is Probable tautomerase RSp1151, found in Ralstonia nicotianae (strain ATCC BAA-1114 / GMI1000) (Ralstonia solanacearum).